The following is a 173-amino-acid chain: Pyridoxal 5'-phosphate synthase subunit PdxT (173 aa).

Residue 49–51 (GES) coordinates L-glutamine. The active-site Nucleophile is Cys-81. L-glutamine contacts are provided by residues Arg-113 and 141–142 (IR).

Belongs to the glutaminase PdxT/SNO family. As to quaternary structure, in the presence of PdxS, forms a dodecamer of heterodimers. Only shows activity in the heterodimer.

It catalyses the reaction aldehydo-D-ribose 5-phosphate + D-glyceraldehyde 3-phosphate + L-glutamine = pyridoxal 5'-phosphate + L-glutamate + phosphate + 3 H2O + H(+). The catalysed reaction is L-glutamine + H2O = L-glutamate + NH4(+). The protein operates within cofactor biosynthesis; pyridoxal 5'-phosphate biosynthesis. Catalyzes the hydrolysis of glutamine to glutamate and ammonia as part of the biosynthesis of pyridoxal 5'-phosphate. The resulting ammonia molecule is channeled to the active site of PdxS. The chain is Pyridoxal 5'-phosphate synthase subunit PdxT from Mycolicibacterium paratuberculosis (strain ATCC BAA-968 / K-10) (Mycobacterium paratuberculosis).